Reading from the N-terminus, the 565-residue chain is Sulfite reductase [NADPH] hemoprotein beta-component (565 aa).

[4Fe-4S] cluster-binding residues include Cys-429, Cys-435, Cys-474, and Cys-478. Residue Cys-478 coordinates siroheme.

This sequence belongs to the nitrite and sulfite reductase 4Fe-4S domain family. In terms of assembly, alpha(8)-beta(8). The alpha component is a flavoprotein, the beta component is a hemoprotein. The cofactor is siroheme. [4Fe-4S] cluster serves as cofactor.

It catalyses the reaction hydrogen sulfide + 3 NADP(+) + 3 H2O = sulfite + 3 NADPH + 4 H(+). It participates in sulfur metabolism; hydrogen sulfide biosynthesis; hydrogen sulfide from sulfite (NADPH route): step 1/1. In terms of biological role, component of the sulfite reductase complex that catalyzes the 6-electron reduction of sulfite to sulfide. This is one of several activities required for the biosynthesis of L-cysteine from sulfate. The chain is Sulfite reductase [NADPH] hemoprotein beta-component from Shewanella baltica (strain OS185).